A 147-amino-acid chain; its full sequence is Hemoglobin subunit gamma (147 aa).

The Globin domain maps to 3-147; the sequence is HFTAEEKAII…VATALAHKYH (145 aa). The heme b site is built by His-64 and His-93.

It belongs to the globin family. In terms of assembly, heterotetramer of two alpha chains and two gamma chains in fetal hemoglobin (Hb F). Red blood cells.

In terms of biological role, gamma chains make up the fetal hemoglobin F, in combination with alpha chains. The sequence is that of Hemoglobin subunit gamma (HBG) from Otolemur crassicaudatus (Brown greater galago).